Here is a 460-residue protein sequence, read N- to C-terminus: Bifunctional protein GlmU (460 aa).

Positions 1–229 are pyrophosphorylase; sequence MTNYAIILAA…FNESLGVNDR (229 aa). UDP-N-acetyl-alpha-D-glucosamine is bound by residues 8-11, Lys-22, Gln-72, and 77-78; these read LAAG and GT. Asp-102 is a binding site for Mg(2+). UDP-N-acetyl-alpha-D-glucosamine contacts are provided by Gly-139, Glu-154, Asn-169, and Asn-227. Residue Asn-227 participates in Mg(2+) binding. Residues 230–250 are linker; sequence VALATAETVMRQRITQKHMVN. Positions 251 to 460 are N-acetyltransferase; the sequence is GVTFQNPETV…RLAHHPSRSK (210 aa). UDP-N-acetyl-alpha-D-glucosamine is bound by residues Arg-332 and Lys-350. His-362 acts as the Proton acceptor in catalysis. UDP-N-acetyl-alpha-D-glucosamine is bound by residues Tyr-365 and Asn-376. Residues Ala-379, 385–386, Ser-404, Ala-422, and Arg-439 contribute to the acetyl-CoA site; that span reads NY.

It in the N-terminal section; belongs to the N-acetylglucosamine-1-phosphate uridyltransferase family. This sequence in the C-terminal section; belongs to the transferase hexapeptide repeat family. As to quaternary structure, homotrimer. It depends on Mg(2+) as a cofactor.

The protein localises to the cytoplasm. The enzyme catalyses alpha-D-glucosamine 1-phosphate + acetyl-CoA = N-acetyl-alpha-D-glucosamine 1-phosphate + CoA + H(+). The catalysed reaction is N-acetyl-alpha-D-glucosamine 1-phosphate + UTP + H(+) = UDP-N-acetyl-alpha-D-glucosamine + diphosphate. It functions in the pathway nucleotide-sugar biosynthesis; UDP-N-acetyl-alpha-D-glucosamine biosynthesis; N-acetyl-alpha-D-glucosamine 1-phosphate from alpha-D-glucosamine 6-phosphate (route II): step 2/2. The protein operates within nucleotide-sugar biosynthesis; UDP-N-acetyl-alpha-D-glucosamine biosynthesis; UDP-N-acetyl-alpha-D-glucosamine from N-acetyl-alpha-D-glucosamine 1-phosphate: step 1/1. It participates in bacterial outer membrane biogenesis; LPS lipid A biosynthesis. Its function is as follows. Catalyzes the last two sequential reactions in the de novo biosynthetic pathway for UDP-N-acetylglucosamine (UDP-GlcNAc). The C-terminal domain catalyzes the transfer of acetyl group from acetyl coenzyme A to glucosamine-1-phosphate (GlcN-1-P) to produce N-acetylglucosamine-1-phosphate (GlcNAc-1-P), which is converted into UDP-GlcNAc by the transfer of uridine 5-monophosphate (from uridine 5-triphosphate), a reaction catalyzed by the N-terminal domain. This is Bifunctional protein GlmU from Streptococcus pyogenes serotype M28 (strain MGAS6180).